The following is a 65-amino-acid chain: DNA-directed RNA polymerase subunit omega (65 aa).

It belongs to the RNA polymerase subunit omega family. In terms of assembly, the RNAP catalytic core consists of 2 alpha, 1 beta, 1 beta' and 1 omega subunit. When a sigma factor is associated with the core the holoenzyme is formed, which can initiate transcription.

It carries out the reaction RNA(n) + a ribonucleoside 5'-triphosphate = RNA(n+1) + diphosphate. Functionally, promotes RNA polymerase assembly. Latches the N- and C-terminal regions of the beta' subunit thereby facilitating its interaction with the beta and alpha subunits. The polypeptide is DNA-directed RNA polymerase subunit omega (Baumannia cicadellinicola subsp. Homalodisca coagulata).